Here is a 94-residue protein sequence, read N- to C-terminus: Large ribosomal subunit protein bL27 (94 aa).

Residues 1 to 9 (MLKLNLQFF) constitute a propeptide that is removed on maturation.

This sequence belongs to the bacterial ribosomal protein bL27 family. In terms of processing, the N-terminus is cleaved by ribosomal processing cysteine protease Prp.

In Staphylococcus haemolyticus (strain JCSC1435), this protein is Large ribosomal subunit protein bL27.